We begin with the raw amino-acid sequence, 408 residues long: Solute carrier family 35 member F1 (408 aa).

The segment at 1–21 is disordered; that stretch reads MIPPEQPQQQLQPPSPAPPNH. Helical transmembrane passes span 60–80, 94–114, 129–147, 158–178, 186–206, 221–241, 247–267, 284–304, 311–331, and 335–355; these read MLIS…IGLT, VFQS…TLAV, WWKY…YLVV, IQLL…FFLL, FIGI…DVLV, LLVL…EYII, VEFL…QLAI, LLYV…PVVI, SVNL…LFLF, and FSGL…LYSS.

Belongs to the SLC35F solute transporter family.

Its subcellular location is the cytoplasmic vesicle. The protein localises to the secretory vesicle. The protein resides in the synaptic vesicle membrane. Functionally, putative solute transporter. The sequence is that of Solute carrier family 35 member F1 (SLC35F1) from Homo sapiens (Human).